A 386-amino-acid chain; its full sequence is Succinyl-diaminopimelate desuccinylase (386 aa).

Histidine 73 lines the Zn(2+) pocket. Residue aspartate 75 is part of the active site. Aspartate 106 serves as a coordination point for Zn(2+). Catalysis depends on glutamate 140, which acts as the Proton acceptor. Zn(2+) is bound by residues glutamate 141, glutamate 169, and histidine 355.

It belongs to the peptidase M20A family. DapE subfamily. Homodimer. Zn(2+) is required as a cofactor. Co(2+) serves as cofactor.

The enzyme catalyses N-succinyl-(2S,6S)-2,6-diaminopimelate + H2O = (2S,6S)-2,6-diaminopimelate + succinate. It functions in the pathway amino-acid biosynthesis; L-lysine biosynthesis via DAP pathway; LL-2,6-diaminopimelate from (S)-tetrahydrodipicolinate (succinylase route): step 3/3. In terms of biological role, catalyzes the hydrolysis of N-succinyl-L,L-diaminopimelic acid (SDAP), forming succinate and LL-2,6-diaminopimelate (DAP), an intermediate involved in the bacterial biosynthesis of lysine and meso-diaminopimelic acid, an essential component of bacterial cell walls. The polypeptide is Succinyl-diaminopimelate desuccinylase (Delftia acidovorans (strain DSM 14801 / SPH-1)).